Reading from the N-terminus, the 624-residue chain is Probable potassium transport system protein Kup 1 (624 aa).

The next 12 membrane-spanning stretches (helical) occupy residues 10 to 30 (LALG…LYAL), 48 to 68 (LSLI…MIIF), 94 to 114 (PVFY…GMLT), 133 to 153 (LYPY…SLQA), 159 to 179 (IGYL…ILGI), 210 to 230 (FLLG…ADIG), 242 to 262 (FFIA…NLIV), 270 to 290 (PFFM…ATVA), 331 to 351 (IYVP…CLAF), 363 to 383 (IAVN…AVSI), 388 to 408 (TFNV…FLGA), and 413 to 433 (FITG…IMYS).

It belongs to the HAK/KUP transporter (TC 2.A.72) family.

Its subcellular location is the cell inner membrane. It catalyses the reaction K(+)(in) + H(+)(in) = K(+)(out) + H(+)(out). Its function is as follows. Transport of potassium into the cell. Likely operates as a K(+):H(+) symporter. The chain is Probable potassium transport system protein Kup 1 from Legionella pneumophila (strain Paris).